The chain runs to 238 residues: Lipoarabinomannan carrier protein LprG (238 aa).

An N-terminal signal peptide occupies residues 1–26 (MQAPKHHRRLFAVLATLNTATAVIAG). Cysteine 27 is lipidated: N-palmitoyl cysteine. Cysteine 27 carries the S-diacylglycerol cysteine lipid modification.

It belongs to the LppX/LprAFG lipoprotein family. Modified by Lgt on Cys-27 with an S-linked diacylglyceral, signal peptide is removed by LspA, Cys-27 is further modifed with a fatty acid on its amino group by Lnt yielding a triacylated protein. Probably glycosylated, which is required for T-cell activation.

It localises to the cell inner membrane. The protein resides in the secreted. It is found in the cell wall. Functionally, helps membrane protein ML0556 (P55) transport triacylglycerides (TAG) across the inner cell membrane into the periplasm and probably ultimately to the outer membrane. Binds TAG in its hydrophobic cavity and transfers it between lipid bilayers. TAG probably regulates lipid metabolism and growth regulation and plays a structural role in the outer membrane. Binds di- and triacylated phosphatidyl-myo-inositol mannosides (PIMs), and glycolipid lipoglycan modulins lipoarabinomannan (LAM) and lipomannan (LM), facilitating their recognition by TLR2. Required for activity of drug efflux transporter ML0556. Required, probably with ML0556, for normal surface localization of LAM. In terms of biological role, constitutes a host TLR2 agonist (toll-like receptor) able to stimulate proliferation of CD4+ T-cells derived from a human leprosy patient following protein processing/presentation by MHC class II molecules in peripheral blood mononuclear cells. This chain is Lipoarabinomannan carrier protein LprG, found in Mycobacterium leprae (strain TN).